The chain runs to 493 residues: MFKFALTLTLCLAGSLSLAQHNPHWWGNRNTIVHLFEWKWSDIAQECESFLGPRGFAGVQVSPVNENILSAGRPWWERYQPISYKLTTRSGNEEEFGDMVRRCNDVGVRIYVDVLLNHMSGDFDGVAVGTAGTEAEPSKKSFPGVPYTAQDFHPTCEITDWNDRFQVQQCELVGLKDLDQSSDWVRSKLIEFLDHLIELGVAGFRVDAAKHMASEDLEYIYSSLSNLNIDHGFPHNSRPFIFQEVIDHGHETVSRDEYKDLGAVTEFRFSEEIGNAFRGNNALKWLQSWGTDWGFLPSGQALTFVDNHDNQRDAGAVLNYKSPRQYKMATAFHLAYPYGISRVMSSFAFDDHDTPPPQDAQERIISPEFDADGACVNGWICEHRWRQIYAMVGFKNAVRDTEITGWWDNGDNQISFCRGNKGFLAINNNLYDLSQDLNTCLPAGTYCDVISGSLIDGSCTGKSVTVNENGYGYIHIGSDDFDGVLALHVDAKV.

Positions 1-19 (MFKFALTLTLCLAGSLSLA) are cleaved as a signal peptide. Gln-20 carries the post-translational modification Pyrrolidone carboxylic acid. Residues Cys-47 and Cys-103 are joined by a disulfide bond. Positions 117, 168, and 177 each coordinate Ca(2+). Cys-156 and Cys-170 are disulfide-bonded. Arg-205 contacts chloride. Catalysis depends on Asp-207, which acts as the Nucleophile. His-211 contributes to the Ca(2+) binding site. Residue Glu-244 is the Proton donor of the active site. 2 residues coordinate chloride: Asn-307 and Arg-342. Intrachain disulfides connect Cys-375–Cys-381, Cys-417–Cys-440, and Cys-447–Cys-459.

Belongs to the glycosyl hydrolase 13 family. In terms of assembly, monomer. Ca(2+) is required as a cofactor. It depends on chloride as a cofactor. In terms of tissue distribution, midgut and fat body.

The protein resides in the secreted. It carries out the reaction Endohydrolysis of (1-&gt;4)-alpha-D-glucosidic linkages in polysaccharides containing three or more (1-&gt;4)-alpha-linked D-glucose units.. This chain is Alpha-amylase-related protein (Amyrel), found in Drosophila melanogaster (Fruit fly).